Reading from the N-terminus, the 541-residue chain is uncharacterized protein (541 aa).

A run of 12 helical transmembrane segments spans residues 99–119, 131–153, 165–185, 187–207, 224–244, 256–276, 325–345, 367–387, 409–429, 439–459, 472–494, and 508–528; these read WIVV…SSVY, GVSI…FGSL, FVVY…GGCA, NIWT…TPLS, YVLP…PIIG, WVFW…FFFM, LLIT…VYII, IGLS…CTPI, LYPL…FAWT, WIVP…VFFV, AASA…SLVG, and SLLG…FIYG.

This sequence belongs to the major facilitator superfamily. CAR1 family.

Its subcellular location is the membrane. This is an uncharacterized protein from Schizosaccharomyces pombe (strain 972 / ATCC 24843) (Fission yeast).